A 737-amino-acid polypeptide reads, in one-letter code: Zinc finger protein 184 (737 aa).

In terms of domain architecture, KRAB spans 28 to 99 (VTFKDVVVNF…DSCIPVGPLE (72 aa)). Ser-117 is subject to Phosphoserine. Lys-185 participates in a covalent cross-link: Glycyl lysine isopeptide (Lys-Gly) (interchain with G-Cter in SUMO2). C2H2-type zinc fingers lie at residues 201 to 223 (CKCN…QRTH), 229 to 251 (YKCN…QRIH), 257 to 279 (YKCD…QRIH), 285 to 307 (YKCD…QRIH), 313 to 335 (YTCT…QKIH), 341 to 363 (FKCE…QKIH), 369 to 391 (YKCN…HMIH), 397 to 419 (YECN…QKTH), 425 to 447 (YDCA…LKIH), 453 to 475 (YKCS…RRIH), 481 to 503 (FECS…QKTH), 509 to 531 (YECK…ERIH), 537 to 559 (YQCH…KKIH), 565 to 587 (YKCN…KRIH), 593 to 615 (YACP…QKTH), 621 to 643 (YQCN…QRIH), and 649 to 671 (YKCS…RSTH). The segment at 677–698 (YNSECPQTFSQSTYLTQHQKIH) adopts a C2H2-type 18; degenerate zinc-finger fold. The segment at 704-726 (LGCEDCEKAFQCHSALTKHQRLH) adopts a C2H2-type 19 zinc-finger fold.

Belongs to the krueppel C2H2-type zinc-finger protein family.

It is found in the nucleus. Its function is as follows. May be involved in transcriptional regulation. This is Zinc finger protein 184 (Zfp184) from Mus musculus (Mouse).